Consider the following 988-residue polypeptide: Band 4.1-like protein 2 (988 aa).

Residues Met-1–Val-190 are disordered. Position 2 is an N-acetylthreonine (Thr-2). A Phosphoserine modification is found at Ser-7. Residues Ala-22–Glu-31 are compositionally biased toward basic and acidic residues. A phosphoserine mark is found at Ser-38, Ser-86, and Ser-116. 2 stretches are compositionally biased toward basic and acidic residues: residues Ile-110 to Pro-148 and Glu-160 to Val-190. A phosphoserine mark is found at Ser-201, Ser-379, Ser-395, Ser-492, Ser-543, Ser-555, Ser-561, and Ser-582. Residues Val-211–Ser-492 form the FERM domain. Residues Gln-495–Glu-651 are hydrophilic. Residues Thr-514–Lys-594 form a disordered region. Residues Ser-555 to Val-567 are compositionally biased toward low complexity. Tyr-606 is modified (phosphotyrosine). A phosphoserine mark is found at Ser-610 and Ser-630. Disordered regions lie at residues Met-639 to Ala-788 and Gln-804 to Leu-839. The tract at residues Lys-652 to Pro-837 is spectrin--actin-binding. The segment covering Val-673–Ser-686 has biased composition (basic and acidic residues). Phosphoserine is present on Ser-698. Over residues Gly-704–Ser-717 the composition is skewed to basic and acidic residues. The segment covering Thr-718 to Ser-729 has biased composition (low complexity). The span at Gln-739–Glu-751 shows a compositional bias: basic and acidic residues. Residue Thr-745 is modified to Phosphothreonine. Residues Glu-752–Pro-764 show a composition bias toward acidic residues. Positions Asp-828–Leu-839 are enriched in basic and acidic residues. The interval His-838–Glu-988 is C-terminal (CTD).

In terms of assembly, interacts with FCGR1A. Interacts with TRPC4. Interacts (via CTD domain) with FKBP2. Interacts with NUMA1; this interaction is negatively regulated by CDK1 during metaphase and promotes anaphase-specific localization of NUMA1 in symmetrically dividing cells. In terms of tissue distribution, widely expressed.

It localises to the cytoplasm. The protein localises to the cytoskeleton. Its subcellular location is the cell cortex. The protein resides in the cell membrane. Functionally, required for dynein-dynactin complex and NUMA1 recruitment at the mitotic cell cortex during anaphase. In Mus musculus (Mouse), this protein is Band 4.1-like protein 2.